The chain runs to 443 residues: Trigger factor (443 aa).

One can recognise a PPIase FKBP-type domain in the interval glycine 165–alanine 250.

This sequence belongs to the FKBP-type PPIase family. Tig subfamily.

It localises to the cytoplasm. The enzyme catalyses [protein]-peptidylproline (omega=180) = [protein]-peptidylproline (omega=0). Involved in protein export. Acts as a chaperone by maintaining the newly synthesized protein in an open conformation. Functions as a peptidyl-prolyl cis-trans isomerase. This Ruegeria pomeroyi (strain ATCC 700808 / DSM 15171 / DSS-3) (Silicibacter pomeroyi) protein is Trigger factor.